The primary structure comprises 186 residues: Large ribosomal subunit protein bL12c (186 aa).

Over residues Met1 to Arg11 the composition is skewed to polar residues. Disordered regions lie at residues Met1–Ala23 and Glu162–Ala186. Residues Met1 to Ala53 constitute a chloroplast transit peptide. Positions Ser12–Ala23 are enriched in low complexity. The span at Glu162 to Gly180 shows a compositional bias: basic and acidic residues.

It belongs to the bacterial ribosomal protein bL12 family.

The protein resides in the plastid. The protein localises to the chloroplast. The polypeptide is Large ribosomal subunit protein bL12c (RPL12) (Nicotiana tabacum (Common tobacco)).